The following is a 919-amino-acid chain: DNA-directed RNA polymerase 132 kDa polypeptide (919 aa).

It belongs to the RNA polymerase beta chain family. In terms of assembly, the DNA-dependent RNA polymerase used for intermediate and late genes expression consists of eight subunits (147) kDa, (133) kDa, (35) kDa, (30) kDa, (22) kDa, (19) kDa, (18) kDa and (7) kDa totalling more than 500 kDa in mass. The same holoenzyme, with the addition of the transcription-specificity factor RAP94, is used for early gene expression.

It localises to the virion. The enzyme catalyses RNA(n) + a ribonucleoside 5'-triphosphate = RNA(n+1) + diphosphate. Its function is as follows. Part of the DNA-dependent RNA polymerase which catalyzes the transcription of viral DNA into RNA using the four ribonucleoside triphosphates as substrates. Responsible for the transcription of early, intermediate and late genes. DNA-dependent RNA polymerase associates with the early transcription factor (ETF), itself composed of D6 and A7, thereby allowing the early genes transcription. Late transcription, and probably also intermediate transcription, require newly synthesized RNA polymerase. This chain is DNA-directed RNA polymerase 132 kDa polypeptide (RPO132), found in Sheeppox virus (strain KS-1) (SPPV).